Consider the following 191-residue polypeptide: Flavin reductase (NADH) (191 aa).

46 to 52 is an FAD binding site; it reads YGLTCSA. Ser-55 contributes to the NAD(+) binding site. Residue 72–73 coordinates FAD; it reads RV. Residues His-144 and 166 to 169 each bind NAD(+); that span reads YWRR.

The protein belongs to the non-flavoprotein flavin reductase family.

The catalysed reaction is a reduced flavin + NAD(+) = an oxidized flavin + NADH + 2 H(+). Functionally, catalyzes the reduction of flavin by NADH. Subsequently, the reduced flavins is transferred to the tetracycline 7-halogenase CtcP. In Kitasatospora aureofaciens (Streptomyces aureofaciens), this protein is Flavin reductase (NADH).